Here is a 622-residue protein sequence, read N- to C-terminus: Cilia- and flagella-associated protein 206 (622 aa).

The protein belongs to the CFAP206 family.

The protein resides in the cytoplasm. The protein localises to the cytoskeleton. It localises to the cilium axoneme. Its subcellular location is the cilium basal body. Essential for sperm motility and is involved in the regulation of the beating frequency of motile cilia on the epithelial cells of the respiratory tract. Required for the establishment of radial spokes in sperm flagella. The chain is Cilia- and flagella-associated protein 206 from Bos taurus (Bovine).